A 222-amino-acid polypeptide reads, in one-letter code: Cytochrome b6 (222 aa).

Residues 39–59 (IFYCLGGITLVCFIIQFATGF) form a helical membrane-spanning segment. Position 42 (C42) interacts with heme c. Heme b-binding residues include H93 and H107. Transmembrane regions (helical) follow at residues 97–117 (ASMM…TGGF), 123–143 (LTWI…VTGY), and 193–213 (LHTF…FLMI). H194 and H209 together coordinate heme b.

This sequence belongs to the cytochrome b family. PetB subfamily. The 4 large subunits of the cytochrome b6-f complex are cytochrome b6, subunit IV (17 kDa polypeptide, PetD), cytochrome f and the Rieske protein, while the 4 small subunits are PetG, PetL, PetM and PetN. The complex functions as a dimer. Heme b serves as cofactor. The cofactor is heme c.

It localises to the cellular thylakoid membrane. Its function is as follows. Component of the cytochrome b6-f complex, which mediates electron transfer between photosystem II (PSII) and photosystem I (PSI), cyclic electron flow around PSI, and state transitions. The chain is Cytochrome b6 from Prochlorothrix hollandica.